Consider the following 406-residue polypeptide: 2,3-bisphosphoglycerate-independent phosphoglycerate mutase (406 aa).

The protein belongs to the BPG-independent phosphoglycerate mutase family. A-PGAM subfamily.

The enzyme catalyses (2R)-2-phosphoglycerate = (2R)-3-phosphoglycerate. It participates in carbohydrate degradation; glycolysis; pyruvate from D-glyceraldehyde 3-phosphate: step 3/5. Its function is as follows. Catalyzes the interconversion of 2-phosphoglycerate and 3-phosphoglycerate. This Methanococcus vannielii (strain ATCC 35089 / DSM 1224 / JCM 13029 / OCM 148 / SB) protein is 2,3-bisphosphoglycerate-independent phosphoglycerate mutase.